The primary structure comprises 1947 residues: DNA-directed RNA polymerase subunit beta' (1947 aa).

Residues C119, C121, C141, and C144 each contribute to the Zn(2+) site. The Mg(2+) site is built by D1778, D1780, and D1782.

Belongs to the RNA polymerase beta' chain family. RpoC1 subfamily. In plastids the minimal PEP RNA polymerase catalytic core is composed of four subunits: alpha, beta, beta', and beta''. When a (nuclear-encoded) sigma factor is associated with the core the holoenzyme is formed, which can initiate transcription. Requires Mg(2+) as cofactor. Zn(2+) is required as a cofactor.

The protein localises to the plastid. It localises to the chloroplast. It catalyses the reaction RNA(n) + a ribonucleoside 5'-triphosphate = RNA(n+1) + diphosphate. Functionally, DNA-dependent RNA polymerase catalyzes the transcription of DNA into RNA using the four ribonucleoside triphosphates as substrates. In Oedogonium cardiacum (Filamentous green alga), this protein is DNA-directed RNA polymerase subunit beta'.